The sequence spans 294 residues: Acetyl-coenzyme A carboxylase carboxyl transferase subunit beta (294 aa).

A CoA carboxyltransferase N-terminal domain is found at 25 to 294; the sequence is IWTKCDNCGQ…PKVDYRHCVE (270 aa). Zn(2+)-binding residues include cysteine 29, cysteine 32, cysteine 48, and cysteine 51. The C4-type zinc-finger motif lies at 29–51; it reads CDNCGQLLYKKELERNLEVCPKC.

The protein belongs to the AccD/PCCB family. Acetyl-CoA carboxylase is a heterohexamer composed of biotin carboxyl carrier protein (AccB), biotin carboxylase (AccC) and two subunits each of ACCase subunit alpha (AccA) and ACCase subunit beta (AccD). It depends on Zn(2+) as a cofactor.

Its subcellular location is the cytoplasm. The enzyme catalyses N(6)-carboxybiotinyl-L-lysyl-[protein] + acetyl-CoA = N(6)-biotinyl-L-lysyl-[protein] + malonyl-CoA. It participates in lipid metabolism; malonyl-CoA biosynthesis; malonyl-CoA from acetyl-CoA: step 1/1. Functionally, component of the acetyl coenzyme A carboxylase (ACC) complex. Biotin carboxylase (BC) catalyzes the carboxylation of biotin on its carrier protein (BCCP) and then the CO(2) group is transferred by the transcarboxylase to acetyl-CoA to form malonyl-CoA. This Blochmanniella pennsylvanica (strain BPEN) protein is Acetyl-coenzyme A carboxylase carboxyl transferase subunit beta.